Reading from the N-terminus, the 244-residue chain is Lactate utilization protein A (244 aa).

Belongs to the LutA/YkgE family.

Functionally, is involved in L-lactate degradation and allows cells to grow with lactate as the sole carbon source. The chain is Lactate utilization protein A from Halalkalibacterium halodurans (strain ATCC BAA-125 / DSM 18197 / FERM 7344 / JCM 9153 / C-125) (Bacillus halodurans).